Here is a 114-residue protein sequence, read N- to C-terminus: Hemerythrin (114 aa).

Residues His-26, His-55, Glu-59, His-74, His-78, His-102, and Asp-107 each contribute to the Fe cation site.

It belongs to the hemerythrin family. As to quaternary structure, homooctamer.

Functionally, hemerythrin is a respiratory protein in blood cells of certain marine worms. The oxygen-binding site in each chain contains two iron atoms. The sequence is that of Hemerythrin from Phascolopsis gouldii (Peanut worm).